The primary structure comprises 90 residues: Interferon alpha-inducible protein 27-like protein 2A (90 aa).

Positions 1–24 are cleaved as a signal peptide; the sequence is MLGTLFGSAIGGALAVAGAPVALA. 2 consecutive transmembrane segments (helical) span residues 28-48 and 67-89; these read FTGTGIAAASIAAKMMSAAAI and GVLGLSTSTNAILGAAGAAVGAL.

Belongs to the IFI6/IFI27 family. As to quaternary structure, homodimer. Interacts with SKP2. Interacts with NR4A1. May interact with BCL2.

It is found in the nucleus inner membrane. Functionally, may be involved in the interferon-induced negative regulation of the transcriptional activity of NR4A1, NR4A2 and NR4A3 through the enhancement of XPO1-mediated nuclear export of these nuclear receptors. Through the regulation of NR4A1 transcriptional activity, may play a role in the vascular response to injury. The polypeptide is Interferon alpha-inducible protein 27-like protein 2A (Mus musculus (Mouse)).